A 314-amino-acid chain; its full sequence is Methionyl-tRNA formyltransferase (314 aa).

110-113 contributes to the (6S)-5,6,7,8-tetrahydrofolate binding site; sequence SLLP.

It belongs to the Fmt family.

It catalyses the reaction L-methionyl-tRNA(fMet) + (6R)-10-formyltetrahydrofolate = N-formyl-L-methionyl-tRNA(fMet) + (6S)-5,6,7,8-tetrahydrofolate + H(+). In terms of biological role, attaches a formyl group to the free amino group of methionyl-tRNA(fMet). The formyl group appears to play a dual role in the initiator identity of N-formylmethionyl-tRNA by promoting its recognition by IF2 and preventing the misappropriation of this tRNA by the elongation apparatus. This chain is Methionyl-tRNA formyltransferase, found in Bacillus cereus (strain G9842).